A 228-amino-acid chain; its full sequence is Octanoyltransferase (228 aa).

Residues 31-212 (EETDGILILL…KFEEVFEIKF (182 aa)) form the BPL/LPL catalytic domain. Substrate is bound by residues 76-83 (RGGKITFH), 143-145 (AIG), and 156-158 (GIA). Cysteine 174 functions as the Acyl-thioester intermediate in the catalytic mechanism.

It belongs to the LipB family.

The protein localises to the cytoplasm. The enzyme catalyses octanoyl-[ACP] + L-lysyl-[protein] = N(6)-octanoyl-L-lysyl-[protein] + holo-[ACP] + H(+). Its pathway is protein modification; protein lipoylation via endogenous pathway; protein N(6)-(lipoyl)lysine from octanoyl-[acyl-carrier-protein]: step 1/2. Its function is as follows. Catalyzes the transfer of endogenously produced octanoic acid from octanoyl-acyl-carrier-protein onto the lipoyl domains of lipoate-dependent enzymes. Lipoyl-ACP can also act as a substrate although octanoyl-ACP is likely to be the physiological substrate. In Caldanaerobacter subterraneus subsp. tengcongensis (strain DSM 15242 / JCM 11007 / NBRC 100824 / MB4) (Thermoanaerobacter tengcongensis), this protein is Octanoyltransferase.